The following is an 82-amino-acid chain: MNPIVSAASVVASGLSVGLAAIGPGIGQGTAAAQAVEGIARQPEAEGRIRGTLLLSLAFMESLTIYGLVVALALLFANPFTA.

Transmembrane regions (helical) follow at residues 7–27 and 57–77; these read AASVVASGLSVGLAAIGPGIG and LAFMESLTIYGLVVALALLFA.

Belongs to the ATPase C chain family. In terms of assembly, F-type ATPases have 2 components, F(1) - the catalytic core - and F(0) - the membrane proton channel. F(1) has five subunits: alpha(3), beta(3), gamma(1), delta(1), epsilon(1). F(0) has four main subunits: a(1), b(1), b'(1) and c(10-14). The alpha and beta chains form an alternating ring which encloses part of the gamma chain. F(1) is attached to F(0) by a central stalk formed by the gamma and epsilon chains, while a peripheral stalk is formed by the delta, b and b' chains.

The protein resides in the plastid. Its subcellular location is the chloroplast thylakoid membrane. Functionally, f(1)F(0) ATP synthase produces ATP from ADP in the presence of a proton or sodium gradient. F-type ATPases consist of two structural domains, F(1) containing the extramembraneous catalytic core and F(0) containing the membrane proton channel, linked together by a central stalk and a peripheral stalk. During catalysis, ATP synthesis in the catalytic domain of F(1) is coupled via a rotary mechanism of the central stalk subunits to proton translocation. Key component of the F(0) channel; it plays a direct role in translocation across the membrane. A homomeric c-ring of between 10-14 subunits forms the central stalk rotor element with the F(1) delta and epsilon subunits. The sequence is that of ATP synthase subunit c, chloroplastic from Rhodomonas salina (Cryptomonas salina).